The primary structure comprises 703 residues: Protein teflon (703 aa).

Residues 32–55 form a C2H2-type 1 zinc finger; sequence MFCHFCKDIFTHLPEFMRHLQWSH. 3 disordered regions span residues 78-111, 138-161, and 339-434; these read TSED…PGSS, SHEQ…ARKP, and SQQP…SKLE. 2 stretches are compositionally biased toward polar residues: residues 84 to 94 and 138 to 147; these read QSQANSCSSGD and SHEQSYSKTP. Residues 148–161 are compositionally biased toward basic and acidic residues; it reads PDSRTEGFRCARKP. Polar residues-rich tracts occupy residues 339 to 352 and 364 to 373; these read SQQP…NNAV and SLTVISSSPI. 2 C2H2-type zinc fingers span residues 649–672 and 677–700; these read YFCE…QSVH and FTCS…KTVH.

This sequence belongs to the Teflon family.

It localises to the nucleus. It is found in the chromosome. In terms of biological role, specifically required in males for proper segregation of autosomal bivalents at meiosis I. Expression is required in the male germ line prior to spermatocyte stage S4. May have a role as a bridging molecule maintaining adhesion to hold autosome bivalents together via heterochromatic connections. The protein is Protein teflon of Drosophila pseudoobscura pseudoobscura (Fruit fly).